Consider the following 469-residue polypeptide: D-3-phosphoglycerate dehydrogenase 2 (469 aa).

Serine 2 carries the post-translational modification N-acetylserine. A phosphoserine mark is found at serine 22, serine 29, and serine 33. Residues 208 to 209 (HI), aspartate 228, 285 to 287 (ASR), and aspartate 311 contribute to the NAD(+) site. Residue arginine 287 is part of the active site. Glutamate 316 is an active-site residue. Histidine 347 functions as the Proton donor in the catalytic mechanism. 347–350 (HIGG) contributes to the NAD(+) binding site. An ACT domain is found at 399 to 469 (RVLYIHRNVP…SAKVSIRLLY (71 aa)).

The protein belongs to the D-isomer specific 2-hydroxyacid dehydrogenase family.

The catalysed reaction is (2R)-3-phosphoglycerate + NAD(+) = 3-phosphooxypyruvate + NADH + H(+). It catalyses the reaction (R)-2-hydroxyglutarate + NAD(+) = 2-oxoglutarate + NADH + H(+). The protein operates within amino-acid biosynthesis; L-serine biosynthesis; L-serine from 3-phospho-D-glycerate: step 1/3. In terms of biological role, catalyzes the reversible oxidation of 3-phospho-D-glycerate to 3-phosphonooxypyruvate, the first step of the phosphorylated L-serine biosynthesis pathway. Also catalyzes the reversible oxidation of 2-hydroxyglutarate to 2-oxoglutarate. In Saccharomyces cerevisiae (strain ATCC 204508 / S288c) (Baker's yeast), this protein is D-3-phosphoglycerate dehydrogenase 2 (SER33).